Consider the following 56-residue polypeptide: Large ribosomal subunit protein bL33 (56 aa).

Belongs to the bacterial ribosomal protein bL33 family.

The protein is Large ribosomal subunit protein bL33 of Glaesserella parasuis serovar 5 (strain SH0165) (Haemophilus parasuis).